A 742-amino-acid polypeptide reads, in one-letter code: Zinc transporter ZIP6 (742 aa).

Topologically, residues 1–353 (MMTFLCTRSG…QRNTPVYIAW (353 aa)) are extracellular. N-linked (GlcNAc...) asparagine glycans are attached at residues asparagine 94 and asparagine 127. 2 disordered regions span residues 148 to 182 (PVTT…SQSD) and 191 to 210 (MNQE…RSRR). The span at 152–165 (KKGDMDHSVEKSDP) shows a compositional bias: basic and acidic residues. The segment covering 192–206 (NQESTTALTTPSYVT) has biased composition (polar residues). Residues asparagine 212, asparagine 232, and asparagine 237 are each glycosylated (N-linked (GlcNAc...) asparagine). The segment at 220 to 260 (TQDHASFSPSQPNVTHSNHTHHDEDTPTHQHDDHDEHEHAR) is disordered. Positions 222 to 236 (DHASFSPSQPNVTHS) are enriched in polar residues. A compositionally biased stretch (basic and acidic residues) spans 239 to 260 (THHDEDTPTHQHDDHDEHEHAR). N-linked (GlcNAc...) asparagine glycosylation is found at asparagine 267 and asparagine 337. The interval 310–342 (EDEHSDHSHHHKHHHHHHDHQHLQHPHNHTNGR) is disordered. Residues 316-339 (HSHHHKHHHHHHDHQHLQHPHNHT) show a composition bias toward basic residues. The helical transmembrane segment at 354–374 (LGGFLSITLISLLALVGVVLI) threads the bilayer. Residues 375-385 (PLMNRVCFNFL) lie on the Cytoplasmic side of the membrane. A helical membrane pass occupies residues 386 to 406 (LSFLVALAVGTLSGDALLHLI). Residues 407–430 (PHSQGHHHHGHSEEHAEEEDSLRP) lie on the Extracellular side of the membrane. Residues 431 to 451 (VWTGLTALSGVYIMFLIEHFL) form a helical membrane-spanning segment. The Cytoplasmic segment spans residues 452–644 (TLGKMYKDKN…LKAGMSVRQA (193 aa)). The helical transmembrane segment at 645–665 (MLYNLLSALMGYLGMIIGILI) threads the bilayer. Residues 666-671 (GHYAEN) lie on the Extracellular side of the membrane. A helical membrane pass occupies residues 672-692 (VATWIFALTAGLFMYVALVDM). Residues 693–710 (VPEMLHNDASEAGFSHYG) lie on the Cytoplasmic side of the membrane. The helical transmembrane segment at 711–731 (FFLLQNAGILLGFGIMLIIAV) threads the bilayer. Residues 732 to 742 (FEDRIQLDLGY) lie on the Extracellular side of the membrane.

This sequence belongs to the ZIP transporter (TC 2.A.5) family. Cleaved on the N-terminus before locating to the plasma membrane. In terms of processing, N-glycosylated.

Its subcellular location is the cell membrane. It carries out the reaction Zn(2+)(in) = Zn(2+)(out). Acts as a zinc-influx transporter which plays a role in zinc homeostasis and in the induction of epithelial-to-mesenchymal transition (EMT). This Danio rerio (Zebrafish) protein is Zinc transporter ZIP6.